Here is a 377-residue protein sequence, read N- to C-terminus: Bradyzoite pseudokinase 1 (377 aa).

An N-terminal signal peptide occupies residues methionine 1–glycine 26. Positions histidine 39 to histidine 58 are disordered. One can recognise a Protein kinase domain in the interval threonine 48–phenylalanine 354.

It belongs to the protein kinase superfamily. STE Ser/Thr protein kinase family. WNG subfamily. Forms a complex composed of BPK1, MCP4, MAG1, GRA8 and GRA9. Interacts with MCP4. Interacts with MAG1. Interacts with GRA8. Interacts with GRA9.

It is found in the secreted. In terms of biological role, required for the growth, maintenance, and/or stability, and thus infectivity, of bradyzoite cysts. This chain is Bradyzoite pseudokinase 1, found in Toxoplasma gondii.